The following is a 52-amino-acid chain: Venom peptide 4a (52 aa).

The signal sequence occupies residues 1–23; the sequence is MRSAILLVIVAIVAILGFLGVNA. AXPX repeat units follow at residues 23–26, 31–34, and 39–42; these read AEPL, AEPN, and AAPL. A propeptide spanning residues 24–41 is cleaved from the precursor; that stretch reads EPLPSPLAEPNPHAKAAP. Alanine 51 is modified (alanine amide).

In terms of tissue distribution, expressed by the venom gland.

The protein resides in the secreted. The polypeptide is Venom peptide 4a (Eumenes pomiformis (Potter wasp)).